A 200-amino-acid chain; its full sequence is Imidazole glycerol phosphate synthase subunit HisH (200 aa).

In terms of domain architecture, Glutamine amidotransferase type-1 spans 3–200; the sequence is DVALIDAGGA…LRNFLEMSFP (198 aa). Cys-78 acts as the Nucleophile in catalysis. Residues His-179 and Glu-181 contribute to the active site.

As to quaternary structure, heterodimer of HisH and HisF.

It is found in the cytoplasm. It carries out the reaction 5-[(5-phospho-1-deoxy-D-ribulos-1-ylimino)methylamino]-1-(5-phospho-beta-D-ribosyl)imidazole-4-carboxamide + L-glutamine = D-erythro-1-(imidazol-4-yl)glycerol 3-phosphate + 5-amino-1-(5-phospho-beta-D-ribosyl)imidazole-4-carboxamide + L-glutamate + H(+). The enzyme catalyses L-glutamine + H2O = L-glutamate + NH4(+). It functions in the pathway amino-acid biosynthesis; L-histidine biosynthesis; L-histidine from 5-phospho-alpha-D-ribose 1-diphosphate: step 5/9. Functionally, IGPS catalyzes the conversion of PRFAR and glutamine to IGP, AICAR and glutamate. The HisH subunit catalyzes the hydrolysis of glutamine to glutamate and ammonia as part of the synthesis of IGP and AICAR. The resulting ammonia molecule is channeled to the active site of HisF. This Xanthomonas axonopodis pv. citri (strain 306) protein is Imidazole glycerol phosphate synthase subunit HisH.